The primary structure comprises 130 residues: Peptide methionine sulfoxide reductase MsrB (130 aa).

Positions 8–130 constitute a MsrB domain; sequence LEEWRSMLDP…NSVCLDLVPR (123 aa). Positions 47, 50, 96, and 99 each coordinate Zn(2+). Cys-119 functions as the Nucleophile in the catalytic mechanism.

The protein belongs to the MsrB Met sulfoxide reductase family. It depends on Zn(2+) as a cofactor.

It carries out the reaction L-methionyl-[protein] + [thioredoxin]-disulfide + H2O = L-methionyl-(R)-S-oxide-[protein] + [thioredoxin]-dithiol. This Pseudomonas fluorescens (strain ATCC BAA-477 / NRRL B-23932 / Pf-5) protein is Peptide methionine sulfoxide reductase MsrB.